The primary structure comprises 345 residues: CCAAT/enhancer-binding protein beta (345 aa).

Positions Met-1–Met-24 are required for Lys-174 sumoylation. Arg-3 carries the post-translational modification Asymmetric dimethylarginine; by CARM1. The required for MYC transcriptional repression stretch occupies residues Met-24 to Ala-135. The residue at position 43 (Lys-43) is an N6-acetyllysine; alternate. Position 43 is an N6-methylated lysine; alternate (Lys-43). 2 disordered regions span residues Pro-46 to Gly-67 and Leu-79 to Asp-116. Residues Ala-47–Pro-59 are compositionally biased toward pro residues. Low complexity predominate over residues Ala-84–Ala-100. The 9aaTAD motif lies at Asp-116 to Asp-124. N6-acetyllysine; by KAT2A and KAT2B is present on residues Lys-129 and Lys-132. Lys-133 carries the N6-acetyllysine; by KAT2A and KAT2B; alternate modification. A Glycyl lysine isopeptide (Lys-Gly) (interchain with G-Cter in SUMO2); alternate cross-link involves residue Lys-133. Positions Phe-157–Gly-178 are disordered. Pro residues predominate over residues Leu-160–Ala-171. A Glycyl lysine isopeptide (Lys-Gly) (interchain with G-Cter in SUMO2); alternate cross-link involves residue Lys-174. Lys-174 participates in a covalent cross-link: Glycyl lysine isopeptide (Lys-Gly) (interchain with G-Cter in SUMO); alternate. Residues Lys-185 and Lys-187 each participate in a glycyl lysine isopeptide (Lys-Gly) (interchain with G-Cter in SUMO2) cross-link. Low complexity predominate over residues Ser-218–Pro-232. Residues Ser-218 to Ser-271 are disordered. Thr-226 bears the Phosphothreonine; by GSK3-beta mark. O-linked (GlcNAc) serine glycans are attached at residues Ser-227 and Ser-228. Ser-231 carries the post-translational modification Phosphoserine; by GSK3-beta. At Thr-235 the chain carries Phosphothreonine; by RPS6KA1, CDK2 and MAPK. Residues Lys-260 and Lys-262 each participate in a glycyl lysine isopeptide (Lys-Gly) (interchain with G-Cter in SUMO2) cross-link. Thr-266 bears the Phosphothreonine; by RPS6KA1 and PKC/PRKCA mark. The 64-residue stretch at Ser-271–Leu-334 folds into the bZIP domain. Residues Lys-275–Arg-295 form a basic motif region. Ser-288 bears the Phosphoserine; by PKC/PRKCA mark. Positions Leu-297–Leu-304 are leucine-zipper. Position 325 is a phosphoserine; by CaMK2 (Ser-325). A Glycyl lysine isopeptide (Lys-Gly) (interchain with G-Cter in SUMO2) cross-link involves residue Lys-332.

Belongs to the bZIP family. C/EBP subfamily. As to quaternary structure, binds DNA as a homodimer and as a heterodimer. Interacts with ATF4. Binds DNA as a heterodimer with ATF4. Interacts with MYB; within the complex, MYB and CEBPB bind to different promoter regions. Can form stable heterodimers with CEBPD. Can form stable heterodimers with CEBPA and CEBPE. Interacts with SIX1. Isoform 2 and isoform 3 also form heterodimers. Interacts with TRIM28 and PTGES2. Interacts with PRDM16. Interacts with CCDC85B. Forms a complex with THOC5. Interacts with ZNF638; this interaction increases transcriptional activation. Interacts with CIDEA and CIDEC; these interactions increase transcriptional activation of a subset of CEBPB downstream target genes. Interacts with DDIT3/CHOP. Interacts with EP300; recruits EP300 to chromatin. Interacts with RORA; the interaction disrupts interaction with EP300. Interacts (not methylated) with MED23, MED26, SMARCA2, SMARCB1 and SMARCC1. Interacts with KAT2A and KAT2B. Interacts with ATF5; EP300 is required for ATF5 and CEBPB interaction and DNA binding. Interacts with NFE2L1; the heterodimer represses expression of DSPP during odontoblast differentiation. Post-translationally, methylated. Methylation at Arg-3 by CARM1 and at Lys-43 by EHMT2 inhibit transactivation activity. Methylation is probably inhibited by phosphorylation at Thr-235. Sumoylated by polymeric chains of SUMO2 or SUMO3. Sumoylation at Lys-174 is required for inhibition of T-cells proliferation. In adipocytes, sumoylation at Lys-174 by PIAS1 leads to ubiquitination and subsequent proteasomal degradation. Desumoylated by SENP2, which abolishes ubiquitination and stabilizes protein levels. In terms of processing, ubiquitinated, leading to proteasomal degradation. Post-translationally, phosphorylated at Thr-235 by MAPK and CDK2, serves to prime phosphorylation at Thr-226 and Ser-231 by GSK3B and acquire DNA-binding as well as transactivation activities, required to induce adipogenesis. MAPK and CDK2 act sequentially to maintain Thr-235 in the primed phosphorylated state during mitotical cloning expansion and thereby progression of terminal differentiation. Phosphorylation at Thr-266 enhances transactivation activity. Phosphorylation at Ser-325 in response to calcium increases transactivation activity. Phosphorylated at Thr-235 by RPS6KA1. O-glycosylated, glycosylation at Ser-227 and Ser-228 prevents phosphorylation on Thr-235, Ser-231 and Thr-226 and DNA binding activity which delays the adipocyte differentiation program. In terms of processing, acetylated. Acetylation at Lys-43 is an important and dynamic regulatory event that contributes to its ability to transactivate target genes, including those associated with adipogenesis and adipocyte function. Deacetylation by HDAC1 represses its transactivation activity. Acetylated by KAT2A and KAT2B within a cluster of lysine residues between amino acids 129-133, this acetylation is strongly induced by glucocorticoid treatment and enhances transactivation activity. As to expression, expressed at low levels in the lung, kidney and spleen.

The protein localises to the nucleus. The protein resides in the cytoplasm. In terms of biological role, important transcription factor regulating the expression of genes involved in immune and inflammatory responses. Also plays a significant role in adipogenesis, as well as in the gluconeogenic pathway, liver regeneration, and hematopoiesis. The consensus recognition site is 5'-T[TG]NNGNAA[TG]-3'. Its functional capacity is governed by protein interactions and post-translational protein modifications. During early embryogenesis, plays essential and redundant roles with CEBPA. Has a promitotic effect on many cell types such as hepatocytes and adipocytes but has an antiproliferative effect on T-cells by repressing MYC expression, facilitating differentiation along the T-helper 2 lineage. Binds to regulatory regions of several acute-phase and cytokines genes and plays a role in the regulation of acute-phase reaction and inflammation. Also plays a role in intracellular bacteria killing. During adipogenesis, is rapidly expressed and, after activation by phosphorylation, induces CEBPA and PPARG, which turn on the series of adipocyte genes that give rise to the adipocyte phenotype. The delayed transactivation of the CEBPA and PPARG genes by CEBPB appears necessary to allow mitotic clonal expansion and thereby progression of terminal differentiation. Essential for female reproduction because of a critical role in ovarian follicle development. Restricts osteoclastogenesis: together with NFE2L1; represses expression of DSPP during odontoblast differentiation. Functionally, essential for gene expression induction in activated macrophages. Plays a major role in immune responses such as CD4(+) T-cell response, granuloma formation and endotoxin shock. Not essential for intracellular bacteria killing. Acts as a dominant negative through heterodimerization with isoform 2. Promotes osteoblast differentiation and osteoclastogenesis. The protein is CCAAT/enhancer-binding protein beta of Homo sapiens (Human).